Reading from the N-terminus, the 95-residue chain is Small ribosomal subunit protein uS19 (95 aa).

Positions 76–95 (PTRRFGGHADKKAATKGQVR) are disordered.

The protein belongs to the universal ribosomal protein uS19 family.

Its function is as follows. Protein S19 forms a complex with S13 that binds strongly to the 16S ribosomal RNA. In Pseudothermotoga lettingae (strain ATCC BAA-301 / DSM 14385 / NBRC 107922 / TMO) (Thermotoga lettingae), this protein is Small ribosomal subunit protein uS19.